A 304-amino-acid polypeptide reads, in one-letter code: Acetylglutamate kinase (304 aa).

Substrate is bound by residues G77–G78, R99, and N201.

This sequence belongs to the acetylglutamate kinase family. ArgB subfamily.

It is found in the cytoplasm. It carries out the reaction N-acetyl-L-glutamate + ATP = N-acetyl-L-glutamyl 5-phosphate + ADP. It functions in the pathway amino-acid biosynthesis; L-arginine biosynthesis; N(2)-acetyl-L-ornithine from L-glutamate: step 2/4. Its function is as follows. Catalyzes the ATP-dependent phosphorylation of N-acetyl-L-glutamate. The sequence is that of Acetylglutamate kinase from Methylibium petroleiphilum (strain ATCC BAA-1232 / LMG 22953 / PM1).